The chain runs to 409 residues: Rho-GTPase-activating protein BAG7 (409 aa).

The span at 1–26 shows a compositional bias: polar residues; the sequence is MFNMNLLSTPSSEEGSPQNRSSSMSS. The segment at 1 to 32 is disordered; that stretch reads MFNMNLLSTPSSEEGSPQNRSSSMSSVEGKKD. In terms of domain architecture, Rho-GAP spans 50–257; it reads VSLEESLKVA…FLILHASDII (208 aa). The tract at residues 362–409 is disordered; the sequence is KLLGNVGNSSNTGIKDPTERVPRGEHKTKHKQRQSWLRRLTSPSRTQP. The segment covering 377-386 has biased composition (basic and acidic residues); that stretch reads DPTERVPRGE.

As to quaternary structure, interacts with RHO1.

Functionally, acts in signal transduction. Activates RHO1. This chain is Rho-GTPase-activating protein BAG7 (BAG7), found in Saccharomyces cerevisiae (strain ATCC 204508 / S288c) (Baker's yeast).